The chain runs to 179 residues: Sec-independent protein translocase protein TatB (179 aa).

The helical transmembrane segment at 1 to 21 threads the bilayer; that stretch reads MLDLGLSKMALIGVVALVVLG. A compositionally biased stretch (low complexity) spans 101–115; that stretch reads GAAGDAGSVGSPGSD. The tract at residues 101-134 is disordered; the sequence is GAAGDAGSVGSPGSDTPAAPSWRGSSAALAPKRR.

It belongs to the TatB family. As to quaternary structure, the Tat system comprises two distinct complexes: a TatABC complex, containing multiple copies of TatA, TatB and TatC subunits, and a separate TatA complex, containing only TatA subunits. Substrates initially bind to the TatABC complex, which probably triggers association of the separate TatA complex to form the active translocon.

It is found in the cell inner membrane. Functionally, part of the twin-arginine translocation (Tat) system that transports large folded proteins containing a characteristic twin-arginine motif in their signal peptide across membranes. Together with TatC, TatB is part of a receptor directly interacting with Tat signal peptides. TatB may form an oligomeric binding site that transiently accommodates folded Tat precursor proteins before their translocation. This Burkholderia orbicola (strain AU 1054) protein is Sec-independent protein translocase protein TatB.